Reading from the N-terminus, the 142-residue chain is Hemoglobin subunit alpha (142 aa).

Residues 2–142 (VLSPADKTNV…VSTVLTSKYR (141 aa)) enclose the Globin domain. S4 bears the Phosphoserine mark. N6-succinyllysine is present on K8. At T9 the chain carries Phosphothreonine. K12 is modified (N6-succinyllysine). N6-acetyllysine; alternate is present on K17. K17 is subject to N6-succinyllysine; alternate. Y25 carries the post-translational modification Phosphotyrosine. Residue S36 is modified to Phosphoserine. K41 carries the post-translational modification N6-succinyllysine. S50 is modified (phosphoserine). An O2-binding site is contributed by H59. H88 contacts heme b. S103 carries the post-translational modification Phosphoserine. At T109 the chain carries Phosphothreonine. Phosphoserine is present on residues S125 and S132. Phosphothreonine is present on residues T135 and T138. S139 carries the post-translational modification Phosphoserine.

This sequence belongs to the globin family. In terms of assembly, heterotetramer of two alpha chains and two beta chains. As to expression, red blood cells.

Involved in oxygen transport from the lung to the various peripheral tissues. In terms of biological role, hemopressin acts as an antagonist peptide of the cannabinoid receptor CNR1. Hemopressin-binding efficiently blocks cannabinoid receptor CNR1 and subsequent signaling. In Piliocolobus badius (Western red colobus), this protein is Hemoglobin subunit alpha (HBA).